The primary structure comprises 494 residues: Acetyl-coenzyme A carboxylase carboxyl transferase subunit beta, chloroplastic (494 aa).

Positions L230–N494 constitute a CoA carboxyltransferase N-terminal domain. Zn(2+) contacts are provided by C234, C237, C253, and C256. A C4-type zinc finger spans residues C234–C256.

It belongs to the AccD/PCCB family. In terms of assembly, acetyl-CoA carboxylase is a heterohexamer composed of biotin carboxyl carrier protein, biotin carboxylase and 2 subunits each of ACCase subunit alpha and ACCase plastid-coded subunit beta (accD). Requires Zn(2+) as cofactor.

It localises to the plastid. It is found in the chloroplast stroma. It carries out the reaction N(6)-carboxybiotinyl-L-lysyl-[protein] + acetyl-CoA = N(6)-biotinyl-L-lysyl-[protein] + malonyl-CoA. Its pathway is lipid metabolism; malonyl-CoA biosynthesis; malonyl-CoA from acetyl-CoA: step 1/1. In terms of biological role, component of the acetyl coenzyme A carboxylase (ACC) complex. Biotin carboxylase (BC) catalyzes the carboxylation of biotin on its carrier protein (BCCP) and then the CO(2) group is transferred by the transcarboxylase to acetyl-CoA to form malonyl-CoA. The chain is Acetyl-coenzyme A carboxylase carboxyl transferase subunit beta, chloroplastic from Drimys granadensis.